The primary structure comprises 209 residues: PRA1 family protein A2 (209 aa).

4 helical membrane passes run 51–72, 76–98, 142–162, and 163–183; these read LYYYRTNYFILVIFVLGLALVT, ALVGAALTALSIAFLNDSFAASF, RWVFVITFLTASLVMWFSSCG, and LLWVLYALLTSLAVIIVHASI.

The protein belongs to the PRA1 family.

It is found in the endosome membrane. May be involved in both secretory and endocytic intracellular trafficking in the endosomal/prevacuolar compartments. The polypeptide is PRA1 family protein A2 (PRA1A2) (Arabidopsis thaliana (Mouse-ear cress)).